The chain runs to 371 residues: MYLSRLELTDFRSYRRAALELDPGVNVFVGSNGQGKTNLVEAVCYLALLRSHRTATDAPLVRQGSERAVLHGEVLTSGRRIDLDVEIVPGRANRLRVNGHATRRARDLVGILRVVIFAPEDLALVKGDPAARRDYLDDVLVELRPRLFAVRAEYEKALRQRNAFLRAVAQDGQQVDRNSLDVWNLHFARAAAALLDARRRLVHELAPFVEKAYAAISGGSGAVRLEYRSTVPEEVLQDADEETRIAGILAALRKVQDAELARGLTLVGPHRDDLNLELDSRPARGYASHGESWSYALALRLGAYELLRSDGETPVMILDDVYAELDQQRRRRLTGCVSGAEQLLITSAVDEPDLPVGRRYVVHESQVHVAD.

30 to 37 (GSNGQGKT) contributes to the ATP binding site.

The protein belongs to the RecF family.

It localises to the cytoplasm. In terms of biological role, the RecF protein is involved in DNA metabolism; it is required for DNA replication and normal SOS inducibility. RecF binds preferentially to single-stranded, linear DNA. It also seems to bind ATP. This chain is DNA replication and repair protein RecF, found in Acidothermus cellulolyticus (strain ATCC 43068 / DSM 8971 / 11B).